A 339-amino-acid chain; its full sequence is tRNA (guanine-N(7)-)-methyltransferase (339 aa).

Residues 1 to 20 (MTPPPAKRQKRNEYRKANTA) are disordered. S-adenosyl-L-methionine-binding positions include Gly-94 and 117 to 118 (EI). The tract at residues 141 to 186 (RSSAIPSESSPAAQQPQQHHQQQLQATETAADAASPSSPDATGETL) is disordered. The span at 142 to 181 (SSAIPSESSPAAQQPQQHHQQQLQATETAADAASPSSPDA) shows a compositional bias: low complexity. Residues 202–203 (NT) and Cys-222 contribute to the S-adenosyl-L-methionine site. The active site involves Asp-225. S-adenosyl-L-methionine is bound at residue 311-313 (TEE).

The protein belongs to the class I-like SAM-binding methyltransferase superfamily. TrmB family. As to quaternary structure, forms a complex with trm82.

The protein resides in the nucleus. It carries out the reaction guanosine(46) in tRNA + S-adenosyl-L-methionine = N(7)-methylguanosine(46) in tRNA + S-adenosyl-L-homocysteine. It participates in tRNA modification; N(7)-methylguanine-tRNA biosynthesis. In terms of biological role, catalyzes the formation of N(7)-methylguanine at position 46 (m7G46) in tRNA. The protein is tRNA (guanine-N(7)-)-methyltransferase (trm8) of Aspergillus clavatus (strain ATCC 1007 / CBS 513.65 / DSM 816 / NCTC 3887 / NRRL 1 / QM 1276 / 107).